The following is a 434-amino-acid chain: 3-phosphoshikimate 1-carboxyvinyltransferase (434 aa).

Positions 22, 23, and 27 each coordinate 3-phosphoshikimate. Lys-22 lines the phosphoenolpyruvate pocket. Positions 93 and 121 each coordinate phosphoenolpyruvate. Ser-168, Ser-169, Gln-170, Ser-199, Asp-320, and Lys-347 together coordinate 3-phosphoshikimate. Phosphoenolpyruvate is bound at residue Gln-170. Asp-320 functions as the Proton acceptor in the catalytic mechanism. Phosphoenolpyruvate is bound by residues Arg-351, Arg-394, and Lys-419.

Belongs to the EPSP synthase family. In terms of assembly, monomer.

The protein localises to the cytoplasm. The catalysed reaction is 3-phosphoshikimate + phosphoenolpyruvate = 5-O-(1-carboxyvinyl)-3-phosphoshikimate + phosphate. It participates in metabolic intermediate biosynthesis; chorismate biosynthesis; chorismate from D-erythrose 4-phosphate and phosphoenolpyruvate: step 6/7. In terms of biological role, catalyzes the transfer of the enolpyruvyl moiety of phosphoenolpyruvate (PEP) to the 5-hydroxyl of shikimate-3-phosphate (S3P) to produce enolpyruvyl shikimate-3-phosphate and inorganic phosphate. This Paraburkholderia phymatum (strain DSM 17167 / CIP 108236 / LMG 21445 / STM815) (Burkholderia phymatum) protein is 3-phosphoshikimate 1-carboxyvinyltransferase.